The following is a 227-amino-acid chain: Urease accessory protein UreF (227 aa).

Belongs to the UreF family. As to quaternary structure, ureD, UreF and UreG form a complex that acts as a GTP-hydrolysis-dependent molecular chaperone, activating the urease apoprotein by helping to assemble the nickel containing metallocenter of UreC. The UreE protein probably delivers the nickel.

It localises to the cytoplasm. Functionally, required for maturation of urease via the functional incorporation of the urease nickel metallocenter. The sequence is that of Urease accessory protein UreF from Bacillus sp. (strain TB-90).